The sequence spans 51 residues: 2,3,4,5-tetrahydropyridine-2,6-dicarboxylate N-succinyltransferase (51 aa).

Belongs to the transferase hexapeptide repeat family. Homotrimer.

It is found in the cytoplasm. The catalysed reaction is (S)-2,3,4,5-tetrahydrodipicolinate + succinyl-CoA + H2O = (S)-2-succinylamino-6-oxoheptanedioate + CoA. Its pathway is amino-acid biosynthesis; L-lysine biosynthesis via DAP pathway; LL-2,6-diaminopimelate from (S)-tetrahydrodipicolinate (succinylase route): step 1/3. This chain is 2,3,4,5-tetrahydropyridine-2,6-dicarboxylate N-succinyltransferase (dapD), found in Klebsiella oxytoca.